The following is a 593-amino-acid chain: Myc box-dependent-interacting protein 1 (593 aa).

A2 is subject to N-acetylalanine. The interval 2-122 (AEMGSKGVTA…DYHQKLVDQA (121 aa)) is interaction with BIN2. 2 coiled-coil regions span residues 15–42 (ASNV…TKDE) and 193–267 (HLVA…NDVL). The BAR domain occupies 29–276 (VLQKLGKADE…LVGLEKQHGS (248 aa)). Disordered regions lie at residues 280-354 (TVKA…KEVK) and 400-488 (PVTS…AASS). Phosphoserine occurs at positions 296, 298, and 303. T307 and T323 each carry phosphothreonine. S331 carries the post-translational modification Phosphoserine. The segment at 378 to 421 (FEAPGPFSEQASLLDLDFDPLPPVTSPVKAPTPSGQSIPWDLWE) is clathrin-binding. Residues 520 to 593 (GFMFKVQAQH…FPENFTERVP (74 aa)) form the SH3 domain.

Heterodimer with AMPH. Binds SH3GLB1. Interacts (via SH3 domain) with DNM1. Interacts with SYNJ1. Interacts (via SH3 domain) with DNM2. Isoform IIA interacts with CLTC. Isoform IIB does not interact with CLTC. Isoform IIC1 does not interact with CLTC. Isoform IIC2 does not interact with CLTC. Interacts with AP2A2. Interacts with AP2B1. Interacts with MYC (via N-terminal transactivation domain); the interaction requires the integrity of the conserved MYC box regions 1 and 2. Interacts with BIN2. Interacts with SNX4. Interacts (via BAR domain) with BACE1. Binds (via BAR domain) F-actin. As to quaternary structure, (Microbial infection) Interacts (SH3 domain) with HCV NS5A. In terms of processing, phosphorylated by protein kinase C. In terms of tissue distribution, ubiquitous. Highest expression in the brain and muscle. Expressed in oligodendrocytes. Isoform IIA is expressed only in the brain, where it is detected in the gray matter, but not in the white matter. Isoform BIN1 is widely expressed with highest expression in skeletal muscle.

The protein resides in the nucleus. Its subcellular location is the cytoplasm. It is found in the endosome. The protein localises to the cell membrane. It localises to the sarcolemma. The protein resides in the T-tubule. Functionally, is a key player in the control of plasma membrane curvature, membrane shaping and membrane remodeling. Required in muscle cells for the formation of T-tubules, tubular invaginations of the plasma membrane that function in depolarization-contraction coupling. Is a negative regulator of endocytosis. Is also involved in the regulation of intracellular vesicles sorting, modulation of BACE1 trafficking and the control of amyloid-beta production. In neuronal circuits, endocytosis regulation may influence the internalization of PHF-tau aggregates. May be involved in the regulation of MYC activity and the control cell proliferation. Has actin bundling activity and stabilizes actin filaments against depolymerization in vitro. The chain is Myc box-dependent-interacting protein 1 (BIN1) from Homo sapiens (Human).